We begin with the raw amino-acid sequence, 473 residues long: Photosystem II CP43 reaction center protein (473 aa).

A propeptide spanning residues 1 to 14 is cleaved from the precursor; sequence MKTLYSPRRFYPVE. T15 is subject to N-acetylthreonine. The residue at position 15 (T15) is a Phosphothreonine. The next 5 helical transmembrane spans lie at 69 to 93, 134 to 155, 178 to 200, 255 to 275, and 291 to 312; these read LFEV…PHLA, LIGP…KDRN, KALF…RKIT, KPFA…LSYS, and WFNN…ASQA. Position 367 (E367) interacts with [CaMn4O5] cluster. A helical transmembrane segment spans residues 447–471; sequence RARAAAAGFEKGIDRDLEPVLFMTP.

The protein belongs to the PsbB/PsbC family. PsbC subfamily. As to quaternary structure, PSII is composed of 1 copy each of membrane proteins PsbA, PsbB, PsbC, PsbD, PsbE, PsbF, PsbH, PsbI, PsbJ, PsbK, PsbL, PsbM, PsbT, PsbX, PsbY, PsbZ, Psb30/Ycf12, at least 3 peripheral proteins of the oxygen-evolving complex and a large number of cofactors. It forms dimeric complexes. Binds multiple chlorophylls and provides some of the ligands for the Ca-4Mn-5O cluster of the oxygen-evolving complex. It may also provide a ligand for a Cl- that is required for oxygen evolution. PSII binds additional chlorophylls, carotenoids and specific lipids. serves as cofactor.

The protein resides in the plastid. Its subcellular location is the chloroplast thylakoid membrane. Its function is as follows. One of the components of the core complex of photosystem II (PSII). It binds chlorophyll and helps catalyze the primary light-induced photochemical processes of PSII. PSII is a light-driven water:plastoquinone oxidoreductase, using light energy to abstract electrons from H(2)O, generating O(2) and a proton gradient subsequently used for ATP formation. The chain is Photosystem II CP43 reaction center protein from Gnetum parvifolium (Small-leaved jointfir).